A 284-amino-acid chain; its full sequence is Nucleotide-binding protein Sbal195_0713 (284 aa).

8–15 (GRSGSGKS) is a binding site for ATP. 56-59 (DVRN) serves as a coordination point for GTP.

This sequence belongs to the RapZ-like family.

Functionally, displays ATPase and GTPase activities. The sequence is that of Nucleotide-binding protein Sbal195_0713 from Shewanella baltica (strain OS195).